A 489-amino-acid polypeptide reads, in one-letter code: WD repeat-containing protein JIP5 (489 aa).

A WD 1 repeat occupies 4–45; that stretch reads PLSSDALDLCFHPAAETNLLAVGLISGKIQLINYDDYLSSPS. Positions 46–66 are disordered; it reads SSRTPLAPPSKKSKPSTISSA. A WD 2 repeat occupies 124-163; it reads EVHDAAPSRVLPVDESLVVTGDDDGVVRLWDVRKGGGKGI. Residues 192 to 246 are disordered; the sequence is SIKEAKKSKTQLKKQRRRARQAERLKEHDKEKREQNASDTEASEPDSEDDAAIKV. A compositionally biased stretch (basic residues) spans 199–210; sequence SKTQLKKQRRRA. Basic and acidic residues predominate over residues 211–227; the sequence is RQAERLKEHDKEKREQN. Over residues 232 to 241 the composition is skewed to acidic residues; it reads EASEPDSEDD. 2 WD repeats span residues 279–318 and 323–363; these read DQED…LDHV and GHPA…GVIA. The disordered stretch occupies residues 417–489; the sequence is IVGLAEDDSD…AGKGGFFSDL (73 aa). Composition is skewed to acidic residues over residues 421–440 and 449–472; these read AEDD…DDDD and DGAE…DSED.

The protein belongs to the WD repeat WDR55 family.

The protein resides in the nucleus. It localises to the nucleolus. The sequence is that of WD repeat-containing protein JIP5 (JIP5) from Mycosarcoma maydis (Corn smut fungus).